Here is a 448-residue protein sequence, read N- to C-terminus: Phosphoglucosamine mutase (448 aa).

Catalysis depends on Ser99, which acts as the Phosphoserine intermediate. Mg(2+) is bound by residues Ser99, Asp239, Asp241, and Asp243. Phosphoserine is present on Ser99.

This sequence belongs to the phosphohexose mutase family. The cofactor is Mg(2+). In terms of processing, activated by phosphorylation.

The catalysed reaction is alpha-D-glucosamine 1-phosphate = D-glucosamine 6-phosphate. In terms of biological role, catalyzes the conversion of glucosamine-6-phosphate to glucosamine-1-phosphate. This is Phosphoglucosamine mutase from Lachnoclostridium phytofermentans (strain ATCC 700394 / DSM 18823 / ISDg) (Clostridium phytofermentans).